We begin with the raw amino-acid sequence, 202 residues long: Urease accessory protein UreG (202 aa).

Residue 11-18 participates in GTP binding; the sequence is GPVGSGKT.

The protein belongs to the SIMIBI class G3E GTPase family. UreG subfamily. In terms of assembly, homodimer. UreD, UreF and UreG form a complex that acts as a GTP-hydrolysis-dependent molecular chaperone, activating the urease apoprotein by helping to assemble the nickel containing metallocenter of UreC. The UreE protein probably delivers the nickel.

Its subcellular location is the cytoplasm. In terms of biological role, facilitates the functional incorporation of the urease nickel metallocenter. This process requires GTP hydrolysis, probably effectuated by UreG. The polypeptide is Urease accessory protein UreG (Prochlorococcus marinus (strain MIT 9313)).